We begin with the raw amino-acid sequence, 250 residues long: Hemocyanin, units C and D (250 aa).

A Cu cation-binding site is contributed by His1. Residues 1-106 (HGSTKWCPSP…RAWIEPVTSA (106 aa)) form a unit C region. Cys7 and Cys18 are oxidised to a cystine. The 2'-(S-cysteinyl)-histidine (Cys-His) cross-link spans 19–21 (CHH). Residues His21 and His143 each coordinate Cu cation. The interval 107-250 (VRIRKNLNDL…DAQDVIYNNH (144 aa)) is unit D. A disulfide bond links Cys149 and Cys160. The segment at residues 161–163 (CLH) is a cross-link (2'-(S-cysteinyl)-histidine (Cys-His)). His172 is a binding site for Cu cation.

The protein belongs to the tyrosinase family. Hemocyanin subfamily. As to quaternary structure, decamers of large identical subunits (390 kDa), each containing 8 globular oxygen-binding functional units. Cu(2+) serves as cofactor.

Functionally, hemocyanins are copper-containing oxygen carriers occurring freely dissolved in the hemolymph of many mollusks and arthropods. This Sepia officinalis (Common cuttlefish) protein is Hemocyanin, units C and D.